Reading from the N-terminus, the 243-residue chain is Fibroblast growth factor 12 (243 aa).

Disordered regions lie at residues 1 to 39 (MAAA…DGRS) and 216 to 243 (IGEK…QDST). A Bipartite nuclear localization signal motif is present at residues 11–38 (RQKRQARESNSDRVSASKRRSSPSKDGR).

The protein belongs to the heparin-binding growth factors family. In terms of assembly, interacts with the C-terminal region of SCN9A. Brain, eye and testis; highly expressed in embryonic retina, olfactory epithelium, olfactory bulb, and in a segmental pattern of the body wall; in adult olfactory bulb, less in cerebellum, deep cerebellar nuclei, cortex and multiple midbrain structures.

Its subcellular location is the nucleus. In terms of biological role, involved in nervous system development and function. Involved in the positive regulation of voltage-gated sodium channel activity. Promotes neuronal excitability by elevating the voltage dependence of neuronal sodium channel SCN8A fast inactivation. This is Fibroblast growth factor 12 (FGF12) from Homo sapiens (Human).